A 261-amino-acid polypeptide reads, in one-letter code: Acyl-[acyl-carrier-protein]--UDP-N-acetylglucosamine O-acyltransferase (261 aa).

The protein belongs to the transferase hexapeptide repeat family. LpxA subfamily. As to quaternary structure, homotrimer.

It is found in the cytoplasm. It carries out the reaction a (3R)-hydroxyacyl-[ACP] + UDP-N-acetyl-alpha-D-glucosamine = a UDP-3-O-[(3R)-3-hydroxyacyl]-N-acetyl-alpha-D-glucosamine + holo-[ACP]. The protein operates within glycolipid biosynthesis; lipid IV(A) biosynthesis; lipid IV(A) from (3R)-3-hydroxytetradecanoyl-[acyl-carrier-protein] and UDP-N-acetyl-alpha-D-glucosamine: step 1/6. Functionally, involved in the biosynthesis of lipid A, a phosphorylated glycolipid that anchors the lipopolysaccharide to the outer membrane of the cell. This chain is Acyl-[acyl-carrier-protein]--UDP-N-acetylglucosamine O-acyltransferase, found in Aquifex aeolicus (strain VF5).